The chain runs to 379 residues: Alcohol dehydrogenase class-2 isozyme 1 (379 aa).

7 residues coordinate Zn(2+): Cys47, His69, Cys99, Cys102, Cys105, Cys113, and Cys176. NAD(+)-binding positions include 205-210 (GLGGVG), Asp229, Lys234, 298-300 (VGV), and Arg374.

It belongs to the zinc-containing alcohol dehydrogenase family. Class-II subfamily. In terms of assembly, homodimer. The cofactor is Zn(2+).

Its subcellular location is the cytoplasm. It catalyses the reaction a primary alcohol + NAD(+) = an aldehyde + NADH + H(+). It carries out the reaction a secondary alcohol + NAD(+) = a ketone + NADH + H(+). This chain is Alcohol dehydrogenase class-2 isozyme 1 (ADH2-1), found in Oryctolagus cuniculus (Rabbit).